The chain runs to 458 residues: Exodeoxyribonuclease 7 large subunit (458 aa).

This sequence belongs to the XseA family. As to quaternary structure, heterooligomer composed of large and small subunits.

It is found in the cytoplasm. It carries out the reaction Exonucleolytic cleavage in either 5'- to 3'- or 3'- to 5'-direction to yield nucleoside 5'-phosphates.. In terms of biological role, bidirectionally degrades single-stranded DNA into large acid-insoluble oligonucleotides, which are then degraded further into small acid-soluble oligonucleotides. The protein is Exodeoxyribonuclease 7 large subunit of Escherichia coli O81 (strain ED1a).